A 101-amino-acid chain; its full sequence is Small ribosomal subunit protein uS14 (101 aa).

Residues 32-62 form a disordered region; it reads GDAKRSDAEREAARLGLQKLPRNANPTRQRN. Basic and acidic residues predominate over residues 33–44; sequence DAKRSDAEREAA.

This sequence belongs to the universal ribosomal protein uS14 family. Part of the 30S ribosomal subunit. Contacts proteins S3 and S10.

Its function is as follows. Binds 16S rRNA, required for the assembly of 30S particles and may also be responsible for determining the conformation of the 16S rRNA at the A site. The chain is Small ribosomal subunit protein uS14 from Verminephrobacter eiseniae (strain EF01-2).